Reading from the N-terminus, the 103-residue chain is Ig kappa-b4 chain C region (103 aa).

The Ig-like domain occupies 5 to 95 (PTVLIFPPAA…KVTQGTTSVV (91 aa)). C26 and C85 are disulfide-bonded.

The chain is Ig kappa-b4 chain C region from Oryctolagus cuniculus (Rabbit).